The primary structure comprises 1266 residues: Intermembrane phospholipid transporter YhdP (1266 aa).

The Cytoplasmic portion of the chain corresponds to 1 to 5 (MRRLP). Residues 6–26 (GILLLTGAALVVIAALLVSGL) traverse the membrane as a helical segment. Topologically, residues 27–1266 (RIALPHLDAW…LRQPRKEKAQ (1240 aa)) are periplasmic. The segment at 94 to 103 (VWQSLLHMRW) is P-helix. The interval 1121–1144 (HAGQLLRLLSVDALMRKLRFDFRD) is C-helix_2. The segment at 1203–1237 (ISATVGVAAAFAVNPIVGAAVFAASKVLGPLWSKV) is C-helix_1.

It localises to the cell inner membrane. In terms of biological role, involved in outer membrane lipid homeostasis. Likely transports phospholipids between the inner membrane and the outer membrane. It would provide a bridge-like structure that protects phospholipids as they travel across the periplasm. The phosphate-containing molecules are captured along the length of a hydrophobic groove that is continuous along all but the extreme N-terminus of the protein. It also appears to control, directly or indirectly, levels of cyclic enterobacterial common antigen (cyclic ECA), a soluble cyclic ECA molecule present in the periplasm. Its function is as follows. TamB, YdbH and YhdP are redundant, but not equivalent, in performing an essential function for growth and maintaining lipid homeostasis in the outer membrane. The transport functions of TamB and YhdP could be differentiated according to the fatty acid saturation state of the phospholipids, with TamB transporting more unsaturated phospholipids and YhdP more saturated phospholipids. Any of these three proteins is sufficient for growth. In Escherichia coli (strain K12), this protein is Intermembrane phospholipid transporter YhdP (yhdP).